Consider the following 293-residue polypeptide: ATP phosphoribosyltransferase (293 aa).

It belongs to the ATP phosphoribosyltransferase family. Long subfamily. Requires Mg(2+) as cofactor.

It localises to the cytoplasm. It carries out the reaction 1-(5-phospho-beta-D-ribosyl)-ATP + diphosphate = 5-phospho-alpha-D-ribose 1-diphosphate + ATP. It functions in the pathway amino-acid biosynthesis; L-histidine biosynthesis; L-histidine from 5-phospho-alpha-D-ribose 1-diphosphate: step 1/9. With respect to regulation, feedback inhibited by histidine. Its function is as follows. Catalyzes the condensation of ATP and 5-phosphoribose 1-diphosphate to form N'-(5'-phosphoribosyl)-ATP (PR-ATP). Has a crucial role in the pathway because the rate of histidine biosynthesis seems to be controlled primarily by regulation of HisG enzymatic activity. This Nitratidesulfovibrio vulgaris (strain DP4) (Desulfovibrio vulgaris) protein is ATP phosphoribosyltransferase.